Consider the following 482-residue polypeptide: MFS-type transporter traF (482 aa).

Positions 1–14 (MTSGTEQATLNTEE) are enriched in polar residues. Positions 1–22 (MTSGTEQATLNTEENGSDSDHL) are disordered. 2 N-linked (GlcNAc...) asparagine glycosylation sites follow: N15 and N45. 9 helical membrane-spanning segments follow: residues 52–72 (VFIT…SSVM), 89–109 (LSIL…LLFG), 125–145 (VFLF…ATIF), 149–169 (FLCG…LADL), 176–196 (GIAV…GPLV), 209–229 (WTQW…FVFC), 275–295 (PILA…YLCF), 312–332 (IGSL…VIII), and 354–374 (LVPM…FAWT). N376 is a glycosylation site (N-linked (GlcNAc...) asparagine). A run of 3 helical transmembrane segments spans residues 379–399 (LPWA…LLIF), 427–447 (LLGA…GVPW), and 448–468 (AMSL…LFFI).

The protein belongs to the major facilitator superfamily. CAR1 family.

The protein localises to the membrane. Its function is as follows. MFS-type transporter; part of the tra gene cluster that produces terrestric acid. The clavatol biosynthesis cluster cla and the terrestric acid cluster tra are both involved in the production of peniphenones and penilactones. The protein is MFS-type transporter traF of Penicillium crustosum (Blue mold fungus).